We begin with the raw amino-acid sequence, 307 residues long: Small ribosomal subunit biogenesis GTPase RsgA (307 aa).

Residues 1–21 (MPSEHPFSDGISTPNPKETMN) form a disordered region. The span at 10-21 (GISTPNPKETMN) shows a compositional bias: polar residues. The CP-type G domain occupies 85–242 (RQDAWKTKLI…LIDSPGLQEF (158 aa)). Residues 135–138 (NKAD) and 184–192 (GQSGMGKST) contribute to the GTP site. Residues C266, C271, H273, and C279 each contribute to the Zn(2+) site.

This sequence belongs to the TRAFAC class YlqF/YawG GTPase family. RsgA subfamily. Monomer. Associates with 30S ribosomal subunit, binds 16S rRNA. It depends on Zn(2+) as a cofactor.

It localises to the cytoplasm. One of several proteins that assist in the late maturation steps of the functional core of the 30S ribosomal subunit. Helps release RbfA from mature subunits. May play a role in the assembly of ribosomal proteins into the subunit. Circularly permuted GTPase that catalyzes slow GTP hydrolysis, GTPase activity is stimulated by the 30S ribosomal subunit. The protein is Small ribosomal subunit biogenesis GTPase RsgA of Neisseria gonorrhoeae (strain ATCC 700825 / FA 1090).